A 276-amino-acid chain; its full sequence is MLMITSFANPRVAQAFVDYMATQGVILTIQQHNQSDIWLADESQAERVRGELARFIENPGDPRYLAASWQSGQTNSGLRYRRFPFLATLRERAGPVTWIVMLACVLVYIAMSLIGDQTVMVWLAWPFDPVLKFEVWRYFTHIFMHFSLMHILFNLLWWWYLGGAVEKRLGSGKLIVITVISALLSGYVQQKFSGPWFGGLSGVVYALMGYVWLRGERDPQSGIYLQRGLIIFALLWIVAGWFDWFGMSMANGAHIAGLIVGLAMAFVDTLNARKRT.

6 consecutive transmembrane segments (helical) span residues 94–114, 142–162, 169–189, 192–212, 229–249, and 250–270; these read GPVTWIVMLACVLVYIAMSLI, IFMHFSLMHILFNLLWWWYLG, LGSGKLIVITVISALLSGYVQ, FSGPWFGGLSGVVYALMGYVW, LIIFALLWIVAGWFDWFGMSM, and ANGAHIAGLIVGLAMAFVDTL. Residue serine 201 is the Nucleophile of the active site. Histidine 254 is an active-site residue.

The protein belongs to the peptidase S54 family.

The protein localises to the cell inner membrane. It catalyses the reaction Cleaves type-1 transmembrane domains using a catalytic dyad composed of serine and histidine that are contributed by different transmembrane domains.. Rhomboid-type serine protease that catalyzes intramembrane proteolysis. In Salmonella dublin (strain CT_02021853), this protein is Rhomboid protease GlpG.